Consider the following 303-residue polypeptide: N-acetyl-D-glucosamine kinase (303 aa).

ATP is bound by residues 4–11 (GFDIGGTK) and 133–140 (GVGGGLVL). Residues histidine 157, cysteine 177, cysteine 179, and cysteine 184 each contribute to the Zn(2+) site.

It belongs to the ROK (NagC/XylR) family. NagK subfamily.

It carries out the reaction N-acetyl-D-glucosamine + ATP = N-acetyl-D-glucosamine 6-phosphate + ADP + H(+). The protein operates within cell wall biogenesis; peptidoglycan recycling. Its function is as follows. Catalyzes the phosphorylation of N-acetyl-D-glucosamine (GlcNAc) derived from cell-wall degradation, yielding GlcNAc-6-P. The polypeptide is N-acetyl-D-glucosamine kinase (Salmonella gallinarum (strain 287/91 / NCTC 13346)).